The sequence spans 253 residues: Isoprenyl transferase (253 aa).

The active site involves aspartate 30. Aspartate 30 contributes to the Mg(2+) binding site. Substrate-binding positions include 31–34 (GNRR), tryptophan 35, histidine 51, and 79–81 (STE). Asparagine 82 (proton acceptor) is an active-site residue. Substrate contacts are provided by residues phenylalanine 83, arginine 85, arginine 202, and 208–210 (RVS). Residue glutamate 221 participates in Mg(2+) binding.

It belongs to the UPP synthase family. Homodimer. Mg(2+) serves as cofactor.

In terms of biological role, catalyzes the condensation of isopentenyl diphosphate (IPP) with allylic pyrophosphates generating different type of terpenoids. This is Isoprenyl transferase from Chlamydia muridarum (strain MoPn / Nigg).